The chain runs to 550 residues: Glycosyltransferase-like protein gnt12 (550 aa).

The disordered stretch occupies residues 1–29 (MSYLPLYNNNNNINNNNNNNNNRINNNKE). Topologically, residues 1–36 (MSYLPLYNNNNNINNNNNNNNNRINNNKEKGVKNKP) are cytoplasmic. The segment covering 8-25 (NNNNNINNNNNNNNNRIN) has biased composition (low complexity). Residues 37 to 57 (FQIFISIVFIVFLCFFLIWSM) traverse the membrane as a helical; Signal-anchor for type II membrane protein segment. Residues 58–550 (EAKKDKNIKI…LFNEPLTNEC (493 aa)) are Extracellular-facing. Residues 81-97 (LINEPINNNKNNKNNIP) show a composition bias toward low complexity. Residues 81 to 100 (LINEPINNNKNNKNNIPKNH) are disordered. 3 N-linked (GlcNAc...) asparagine glycosylation sites follow: Asn233, Asn322, and Asn426.

It belongs to the glycosyltransferase 8 family. Highly divergent.

Its subcellular location is the membrane. The protein is Glycosyltransferase-like protein gnt12 (gnt12) of Dictyostelium discoideum (Social amoeba).